A 125-amino-acid chain; its full sequence is C-X-C motif chemokine 9 (125 aa).

Residues 1–21 (MKKSAPLFLGIIFLTLTGVQG) form the signal peptide. 2 disulfides stabilise this stretch: Cys30–Cys57 and Cys32–Cys73. Residues 91-125 (QVNQKKKQRKGKKYKKTKKVPKVKRSQRPSQKKTT) are disordered. Positions 93–125 (NQKKKQRKGKKYKKTKKVPKVKRSQRPSQKKTT) are enriched in basic residues.

The protein belongs to the intercrine alpha (chemokine CxC) family.

Its subcellular location is the secreted. Cytokine that affects the growth, movement, or activation state of cells that participate in immune and inflammatory response. Chemotactic for activated T-cells. Binds to CXCR3. The sequence is that of C-X-C motif chemokine 9 (CXCL9) from Bos taurus (Bovine).